The following is a 476-amino-acid chain: UDP-N-acetylmuramate--L-alanine ligase (476 aa).

125-131 (GTHGKTT) contributes to the ATP binding site.

It belongs to the MurCDEF family.

The protein resides in the cytoplasm. It carries out the reaction UDP-N-acetyl-alpha-D-muramate + L-alanine + ATP = UDP-N-acetyl-alpha-D-muramoyl-L-alanine + ADP + phosphate + H(+). It participates in cell wall biogenesis; peptidoglycan biosynthesis. In terms of biological role, cell wall formation. The protein is UDP-N-acetylmuramate--L-alanine ligase of Actinobacillus succinogenes (strain ATCC 55618 / DSM 22257 / CCUG 43843 / 130Z).